Here is a 172-residue protein sequence, read N- to C-terminus: Stellate protein CG33239/CG33241 (172 aa).

It belongs to the casein kinase 2 subunit beta family. In terms of assembly, interacts in vitro with the casein kinase 2 alpha subunit (CkII-alpha). The relevance of such interaction is however unclear in vivo. As to expression, probably not expressed in wild-type flies. In males lacking the Y chromosome, it is testis-specific and constitutes the main component of star-shaped crystals.

Unknown. In males lacking the Y chromosome, its strong overexpression leads to the appearance of proteinaceous star-shaped crystals in the primary spermatocytes causing meiotic drive, possibly by interfering with normal casein kinase 2 activity. This Drosophila melanogaster (Fruit fly) protein is Stellate protein CG33239/CG33241 (Ste:CG33239).